The primary structure comprises 216 residues: Imidazoleglycerol-phosphate dehydratase (216 aa).

The protein belongs to the imidazoleglycerol-phosphate dehydratase family.

The protein localises to the cytoplasm. The enzyme catalyses D-erythro-1-(imidazol-4-yl)glycerol 3-phosphate = 3-(imidazol-4-yl)-2-oxopropyl phosphate + H2O. The protein operates within amino-acid biosynthesis; L-histidine biosynthesis; L-histidine from 5-phospho-alpha-D-ribose 1-diphosphate: step 6/9. The sequence is that of Imidazoleglycerol-phosphate dehydratase from Nocardia farcinica (strain IFM 10152).